A 209-amino-acid polypeptide reads, in one-letter code: HTH-type transcriptional repressor BepR (209 aa).

Positions 9-69 constitute an HTH tetR-type domain; sequence AETREAILLA…SIIGRARFPQ (61 aa). A DNA-binding region (H-T-H motif) is located at residues 32–51; sequence TLTEIACYAGVTRGAIYFHF.

Represses expression of bepDE. This Brucella suis biovar 1 (strain 1330) protein is HTH-type transcriptional repressor BepR (bepR).